A 411-amino-acid chain; its full sequence is Argininosuccinate synthase (411 aa).

ATP is bound by residues Ala-10–Ser-18 and Ala-37. L-citrulline contacts are provided by Tyr-89 and Ser-94. Residue Gly-119 coordinates ATP. L-aspartate-binding residues include Thr-121, Asn-125, and Asp-126. Residue Asn-125 coordinates L-citrulline. L-citrulline is bound by residues Arg-129, Ser-178, Ser-187, Glu-263, and Tyr-275.

It belongs to the argininosuccinate synthase family. Type 1 subfamily. In terms of assembly, homotetramer.

It localises to the cytoplasm. The enzyme catalyses L-citrulline + L-aspartate + ATP = 2-(N(omega)-L-arginino)succinate + AMP + diphosphate + H(+). Its pathway is amino-acid biosynthesis; L-arginine biosynthesis; L-arginine from L-ornithine and carbamoyl phosphate: step 2/3. This is Argininosuccinate synthase from Aeromonas hydrophila subsp. hydrophila (strain ATCC 7966 / DSM 30187 / BCRC 13018 / CCUG 14551 / JCM 1027 / KCTC 2358 / NCIMB 9240 / NCTC 8049).